The sequence spans 612 residues: uncharacterized protein (612 aa).

It is found in the plastid. The protein resides in the chloroplast. This is an uncharacterized protein from Pyropia yezoensis (Susabi-nori).